The following is a 96-amino-acid chain: Large ribosomal subunit protein eL14 (96 aa).

The protein belongs to the eukaryotic ribosomal protein eL14 family.

This Metallosphaera sedula (strain ATCC 51363 / DSM 5348 / JCM 9185 / NBRC 15509 / TH2) protein is Large ribosomal subunit protein eL14.